Reading from the N-terminus, the 433-residue chain is Tol-Pal system protein TolB (433 aa).

Residues 1–21 (MINLFRGLLVVLCFASAMVAA) form the signal peptide.

The protein belongs to the TolB family. In terms of assembly, the Tol-Pal system is composed of five core proteins: the inner membrane proteins TolA, TolQ and TolR, the periplasmic protein TolB and the outer membrane protein Pal. They form a network linking the inner and outer membranes and the peptidoglycan layer.

It is found in the periplasm. Its function is as follows. Part of the Tol-Pal system, which plays a role in outer membrane invagination during cell division and is important for maintaining outer membrane integrity. The polypeptide is Tol-Pal system protein TolB (Pseudomonas syringae pv. tomato (strain ATCC BAA-871 / DC3000)).